The sequence spans 575 residues: Transcription factor collier (575 aa).

Residues 79 to 82 (RKSN) are interaction with DNA. The C5-type zinc-finger motif lies at 167–186 (CRVLLTHEVMCSRCCDKKSC). Interaction with DNA stretches follow at residues 213–220 (NCLKNAGN) and 252–255 (NNSK). Residues 255-278 (KHGRRAKRLDTTEGTGNTSLSISG) are disordered. The segment covering 266–276 (TEGTGNTSLSI) has biased composition (polar residues). Positions 299-382 (PCIKAISPSE…KGSPGRFVYV (84 aa)) constitute an IPT/TIG domain. Disordered regions lie at residues 456–492 (GQWTEDDYQRAQSSSVSPRGGYCSSASTPHSSGGSYG) and 546–575 (AATAHPHHHYPHPHQPWHNPAVSAATAAAV). Over residues 479–492 (SSASTPHSSGGSYG) the composition is skewed to low complexity. Positions 546–557 (AATAHPHHHYPH) are enriched in basic residues. Residues 561–575 (PWHNPAVSAATAAAV) show a composition bias toward low complexity.

The protein belongs to the COE family. As to expression, its expression at the blastoderm stage is restricted to a single stripe of cells corresponding to part of the intercalary and mandibular segment primordia, possibly parasegment O.

Its subcellular location is the nucleus. Its function is as follows. May act as a 'second-level regulator' of head patterning. Required for establishment of the PS(-1)/PS0 parasegmental border and formation of the intercalary segment. Required for expression of the segment polarity genes hedgehog, engrailed and wingless, and the segment-identity genes CAP and collar in the intercalary segment. Required at the onset of the gastrulation for the correct formation of the mandibular segment. In Drosophila melanogaster (Fruit fly), this protein is Transcription factor collier (kn).